We begin with the raw amino-acid sequence, 176 residues long: Inner membrane-spanning protein YciB (176 aa).

A run of 6 helical transmembrane segments spans residues 3 to 23 (FLFD…WGIF), 24 to 44 (TATA…AFRH), 49 to 69 (TMLW…LVLH), 81 to 101 (LYWL…NNLI), 121 to 141 (VAWA…VHNF), and 149 to 169 (FKLF…SLWL).

This sequence belongs to the YciB family.

The protein localises to the cell inner membrane. Its function is as follows. Plays a role in cell envelope biogenesis, maintenance of cell envelope integrity and membrane homeostasis. This Burkholderia vietnamiensis (strain G4 / LMG 22486) (Burkholderia cepacia (strain R1808)) protein is Inner membrane-spanning protein YciB.